A 257-amino-acid chain; its full sequence is 3-deoxy-manno-octulosonate cytidylyltransferase (257 aa).

It belongs to the KdsB family.

It is found in the cytoplasm. The enzyme catalyses 3-deoxy-alpha-D-manno-oct-2-ulosonate + CTP = CMP-3-deoxy-beta-D-manno-octulosonate + diphosphate. It participates in nucleotide-sugar biosynthesis; CMP-3-deoxy-D-manno-octulosonate biosynthesis; CMP-3-deoxy-D-manno-octulosonate from 3-deoxy-D-manno-octulosonate and CTP: step 1/1. The protein operates within bacterial outer membrane biogenesis; lipopolysaccharide biosynthesis. Functionally, activates KDO (a required 8-carbon sugar) for incorporation into bacterial lipopolysaccharide in Gram-negative bacteria. This is 3-deoxy-manno-octulosonate cytidylyltransferase from Halorhodospira halophila (strain DSM 244 / SL1) (Ectothiorhodospira halophila (strain DSM 244 / SL1)).